A 197-amino-acid chain; its full sequence is Probable nicotinate-nucleotide adenylyltransferase (197 aa).

This sequence belongs to the NadD family.

The catalysed reaction is nicotinate beta-D-ribonucleotide + ATP + H(+) = deamido-NAD(+) + diphosphate. It functions in the pathway cofactor biosynthesis; NAD(+) biosynthesis; deamido-NAD(+) from nicotinate D-ribonucleotide: step 1/1. Catalyzes the reversible adenylation of nicotinate mononucleotide (NaMN) to nicotinic acid adenine dinucleotide (NaAD). The sequence is that of Probable nicotinate-nucleotide adenylyltransferase from Neisseria meningitidis serogroup C (strain 053442).